A 320-amino-acid chain; its full sequence is Quinolinate synthase (320 aa).

Positions 34 and 51 each coordinate iminosuccinate. Position 96 (C96) interacts with [4Fe-4S] cluster. Iminosuccinate is bound by residues 122 to 124 (YIN) and S139. C182 contacts [4Fe-4S] cluster. Iminosuccinate contacts are provided by residues 208 to 210 (HPE) and T225. Residue C276 coordinates [4Fe-4S] cluster.

The protein belongs to the quinolinate synthase family. Type 2 subfamily. [4Fe-4S] cluster is required as a cofactor.

The protein resides in the cytoplasm. The enzyme catalyses iminosuccinate + dihydroxyacetone phosphate = quinolinate + phosphate + 2 H2O + H(+). Its pathway is cofactor biosynthesis; NAD(+) biosynthesis; quinolinate from iminoaspartate: step 1/1. Catalyzes the condensation of iminoaspartate with dihydroxyacetone phosphate to form quinolinate. In Synechococcus sp. (strain ATCC 27144 / PCC 6301 / SAUG 1402/1) (Anacystis nidulans), this protein is Quinolinate synthase.